The following is a 705-amino-acid chain: MNALFASTARGLEELLKSELESLGAQSCAVVQGGVHFEGDNRLLYQSLLWSRLASRILLPLNEFKVHSDLDLYLGVQAIDWSTIFSIDKTFAVHFTGTNEDIRNSQYGALKVKDAIVDSFTRKTGQRPDVAKQQPDIRVNVFLQRDTASVALDLSGEGLHQRGYRDLAGLAPLKENLAAAIVSRSGWQNGTPMVDPMCGSGTLLIEAAMIASDRAPGLHRTHWGFNAWLKHDAELWHELTSEAQQRASQGLQATTSRFFGSDNDRRVIEIAKANARRAGVAELISFGVKDAAQLQNPLPEGPKGTVISNPPYGERLESEPALIALHNMLGRKMKSDFGGWQLSLFSASPELLSCLQLRAERQFKAKNGPLDCVQKNYQLADTQGESAGQIAEDFANRLRKNLRKLEKWAKQQGIECYRIYDADLPEYNVAVDRYGSWVVVQEYAPPKTIDAQKARQRLFDVINATLIVLELPSNRLVLKTRERQKGKNQYEKLAQKGDFLLMEEFGAKLWVNLTDYLDTGLFLDHRIARKMLGEMSRGKDFLNLFAYTGTASVHAGLGGARSTTTVDMSRTYLEWAEKNLRVNGLTGRQHRLIQADCLSWLHNGHEQFDVIFIDPPTFSNSKRMEESFDVQRDHLALMKDLKRLLRRGGTIMFSNNKRGFQMDIAGLTALGLNAKEITAQTQSQDFARNRQIHNCWLLTHAGEEK.

One can recognise a THUMP domain in the interval 43–154 (LLYQSLLWSR…RDTASVALDL (112 aa)).

Belongs to the methyltransferase superfamily. RlmKL family.

The protein localises to the cytoplasm. It catalyses the reaction guanosine(2445) in 23S rRNA + S-adenosyl-L-methionine = N(2)-methylguanosine(2445) in 23S rRNA + S-adenosyl-L-homocysteine + H(+). The catalysed reaction is guanosine(2069) in 23S rRNA + S-adenosyl-L-methionine = N(2)-methylguanosine(2069) in 23S rRNA + S-adenosyl-L-homocysteine + H(+). Functionally, specifically methylates the guanine in position 2445 (m2G2445) and the guanine in position 2069 (m7G2069) of 23S rRNA. The chain is Ribosomal RNA large subunit methyltransferase K/L from Pectobacterium atrosepticum (strain SCRI 1043 / ATCC BAA-672) (Erwinia carotovora subsp. atroseptica).